A 282-amino-acid chain; its full sequence is Probable endonuclease 4 (282 aa).

Zn(2+) contacts are provided by histidine 69, histidine 109, glutamate 145, aspartate 179, histidine 182, histidine 216, aspartate 229, histidine 231, and glutamate 261.

The protein belongs to the AP endonuclease 2 family. The cofactor is Zn(2+).

The enzyme catalyses Endonucleolytic cleavage to 5'-phosphooligonucleotide end-products.. Endonuclease IV plays a role in DNA repair. It cleaves phosphodiester bonds at apurinic or apyrimidinic (AP) sites, generating a 3'-hydroxyl group and a 5'-terminal sugar phosphate. The sequence is that of Probable endonuclease 4 from Chlorobium chlorochromatii (strain CaD3).